We begin with the raw amino-acid sequence, 468 residues long: V-type proton ATPase subunit H (468 aa).

Belongs to the V-ATPase H subunit family. In terms of assembly, V-ATPase is a heteromultimeric enzyme made up of two complexes: the ATP-hydrolytic V1 complex and the proton translocation V0 complex. The V1 complex consists of three catalytic AB heterodimers that form a heterohexamer, three peripheral stalks each consisting of EG heterodimers, one central rotor including subunits D and F, and the regulatory subunits C and H. The proton translocation complex V0 consists of the proton transport subunit a, a ring of proteolipid subunits c9c'', rotary subunit d, subunits e and f, and the accessory subunits VhaAC45 and ATP6AP2.

Its function is as follows. Subunit of the V1 complex of vacuolar(H+)-ATPase (V-ATPase), a multisubunit enzyme composed of a peripheral complex (V1) that hydrolyzes ATP and a membrane integral complex (V0) that translocates protons. V-ATPase is responsible for acidifying and maintaining the pH of intracellular compartments and in some cell types, is targeted to the plasma membrane, where it is responsible for acidifying the extracellular environment. Subunit H is essential for V-ATPase activity, but not for the assembly of the complex. In Drosophila melanogaster (Fruit fly), this protein is V-type proton ATPase subunit H (VhaSFD).